A 714-amino-acid polypeptide reads, in one-letter code: ATP-dependent zinc metalloprotease FtsH (714 aa).

Over 1 to 75 the chain is Cytoplasmic; it reads MEKPRRLRPR…KNPMEPRQQQ (75 aa). The chain crosses the membrane as a helical span at residues 76–96; sequence FSLWYVLVTILAMLAIQTLFV. Residues 97-188 lie on the Periplasmic side of the membrane; the sequence is SGHVETIPYS…FVGQPDNKWL (92 aa). The helical transmembrane segment at 189–209 threads the bilayer; it reads STILSWVVPAVIFFGIWSFLI. Topologically, residues 210–714 are cytoplasmic; the sequence is KRVGGAAGSM…GKPDQKTQGT (505 aa). 280 to 287 is an ATP binding site; it reads GAPGTGKT. Histidine 502 is a Zn(2+) binding site. The active site involves glutamate 503. 2 residues coordinate Zn(2+): histidine 506 and aspartate 579. Positions 688-714 are disordered; sequence PMPPPKPVANIEESTATGKPDQKTQGT. The segment covering 699–714 has biased composition (polar residues); it reads EESTATGKPDQKTQGT.

It in the central section; belongs to the AAA ATPase family. The protein in the C-terminal section; belongs to the peptidase M41 family. As to quaternary structure, homohexamer. Zn(2+) serves as cofactor.

The protein resides in the cell inner membrane. Its function is as follows. Acts as a processive, ATP-dependent zinc metallopeptidase for both cytoplasmic and membrane proteins. Plays a role in the quality control of integral membrane proteins. In Ralstonia pickettii (strain 12J), this protein is ATP-dependent zinc metalloprotease FtsH.